The sequence spans 648 residues: Threonine--tRNA ligase (648 aa).

The 62-residue stretch at 1–62 folds into the TGS domain; it reads MVEIILPDGS…PHGAQVAIIT (62 aa). The tract at residues 243–536 is catalytic; that stretch reads DHRRIGKDLD…LVEHYAGWFP (294 aa). Zn(2+) is bound by residues Cys-336, His-387, and His-513.

This sequence belongs to the class-II aminoacyl-tRNA synthetase family. Homodimer. The cofactor is Zn(2+).

It localises to the cytoplasm. The catalysed reaction is tRNA(Thr) + L-threonine + ATP = L-threonyl-tRNA(Thr) + AMP + diphosphate + H(+). In terms of biological role, catalyzes the attachment of threonine to tRNA(Thr) in a two-step reaction: L-threonine is first activated by ATP to form Thr-AMP and then transferred to the acceptor end of tRNA(Thr). Also edits incorrectly charged L-seryl-tRNA(Thr). The sequence is that of Threonine--tRNA ligase from Magnetococcus marinus (strain ATCC BAA-1437 / JCM 17883 / MC-1).